Here is a 150-residue protein sequence, read N- to C-terminus: uncharacterized protein (150 aa).

Residues 81–90 show a composition bias toward polar residues; it reads TTKPSCSFAQ. Residues 81-125 form a disordered region; sequence TTKPSCSFAQPVTPRTREGAGVRGHRRRRRGSLSLIPWKTSNDKQ.

This is an uncharacterized protein from Homo sapiens (Human).